We begin with the raw amino-acid sequence, 85 residues long: Protein BTH_I0359 (85 aa).

The polypeptide is Protein BTH_I0359 (Burkholderia thailandensis (strain ATCC 700388 / DSM 13276 / CCUG 48851 / CIP 106301 / E264)).